The chain runs to 133 residues: Small ribosomal subunit protein uS8 (133 aa).

This sequence belongs to the universal ribosomal protein uS8 family. In terms of assembly, part of the 30S ribosomal subunit. Contacts proteins S5 and S12.

In terms of biological role, one of the primary rRNA binding proteins, it binds directly to 16S rRNA central domain where it helps coordinate assembly of the platform of the 30S subunit. This chain is Small ribosomal subunit protein uS8, found in Chlamydia pneumoniae (Chlamydophila pneumoniae).